Reading from the N-terminus, the 397-residue chain is Elongation factor Tu (397 aa).

Positions lysine 10–valine 207 constitute a tr-type G domain. Positions glycine 19–threonine 26 are G1. Position 19 to 26 (glycine 19 to threonine 26) interacts with GTP. Position 26 (threonine 26) interacts with Mg(2+). Residues glycine 60–serine 64 form a G2 region. Residues aspartate 81–glycine 84 are G3. GTP-binding positions include aspartate 81 to histidine 85 and asparagine 136 to aspartate 139. Positions asparagine 136–aspartate 139 are G4. The G5 stretch occupies residues serine 174 to leucine 176.

The protein belongs to the TRAFAC class translation factor GTPase superfamily. Classic translation factor GTPase family. EF-Tu/EF-1A subfamily. As to quaternary structure, monomer.

It is found in the cytoplasm. The enzyme catalyses GTP + H2O = GDP + phosphate + H(+). GTP hydrolase that promotes the GTP-dependent binding of aminoacyl-tRNA to the A-site of ribosomes during protein biosynthesis. This chain is Elongation factor Tu, found in Desulforapulum autotrophicum (strain ATCC 43914 / DSM 3382 / VKM B-1955 / HRM2) (Desulfobacterium autotrophicum).